A 200-amino-acid polypeptide reads, in one-letter code: MSGTNKQTNLHRQTETIRQLLGSKVVVLVGLMGAGKSTIGRKVANMLNLPFKDADTEIETVSRMTVAELFEAYGEVEFRDLERRVILRLLDDGPMVLATGGGAYMNAETRAAIAEAGISIWINADLDVLMERVSRRQNRPLLRNSDPRGVMQRLMDERYPVYALAELHLMTRDEKKEVIAAELIEVLAAHLEKEQAASAG.

Position 33–38 (33–38 (GAGKST)) interacts with ATP. A Mg(2+)-binding site is contributed by Ser37. Asp55, Arg79, and Gly101 together coordinate substrate. Position 139 (Arg139) interacts with ATP. Arg158 serves as a coordination point for substrate.

It belongs to the shikimate kinase family. In terms of assembly, monomer. The cofactor is Mg(2+).

The protein resides in the cytoplasm. The catalysed reaction is shikimate + ATP = 3-phosphoshikimate + ADP + H(+). It participates in metabolic intermediate biosynthesis; chorismate biosynthesis; chorismate from D-erythrose 4-phosphate and phosphoenolpyruvate: step 5/7. Its function is as follows. Catalyzes the specific phosphorylation of the 3-hydroxyl group of shikimic acid using ATP as a cosubstrate. The sequence is that of Shikimate kinase from Brucella abortus (strain S19).